A 465-amino-acid polypeptide reads, in one-letter code: Endo-1,3-1,4-beta-glycanase ExsH (465 aa).

Hemolysin-type calcium-binding repeat units lie at residues His-33–Thr-50, Phe-105–Ile-122, and Asp-123–Phe-140. The region spanning Ala-206 to Asp-462 is the GH16 domain. The active-site Nucleophile is the Glu-349. Glu-354 serves as the catalytic Proton donor.

It belongs to the glycosyl hydrolase 16 family.

It localises to the secreted. Its pathway is glycan metabolism; exopolysaccharide biosynthesis. Cleaves high molecular weight succinoglycan to yield LMW succinoglycan. Dynamically regulates the molecular weight distribution of succinoglycan by cleaving nascent succinoglycan only during a limited period after its synthesis, perhaps before it undergoes a time-dependent change in its conformation or aggregation state. This chain is Endo-1,3-1,4-beta-glycanase ExsH (exsH), found in Rhizobium meliloti (strain 1021) (Ensifer meliloti).